The primary structure comprises 122 residues: Large ribosomal subunit protein uL14 (122 aa).

The protein belongs to the universal ribosomal protein uL14 family. As to quaternary structure, part of the 50S ribosomal subunit. Forms a cluster with proteins L3 and L19. In the 70S ribosome, L14 and L19 interact and together make contacts with the 16S rRNA in bridges B5 and B8.

Binds to 23S rRNA. Forms part of two intersubunit bridges in the 70S ribosome. The sequence is that of Large ribosomal subunit protein uL14 from Borreliella afzelii (strain PKo) (Borrelia afzelii).